The following is a 1142-amino-acid chain: Potassium channel subfamily T member 2 (1142 aa).

Residues 1-63 (MVDLESEVPP…KNQRSSLRIR (63 aa)) lie on the Cytoplasmic side of the membrane. A helical membrane pass occupies residues 64-84 (LFNFSLKLLSCLLYIIRVLLE). Over 85 to 101 (KPSQGNDWSHIFWVNRS) the chain is Extracellular. The N-linked (GlcNAc...) asparagine glycan is linked to Asn99. Residues 102 to 122 (LPLWGLQVSVALISLFETILL) traverse the membrane as a helical segment. Over 123 to 137 (GYLSYKGNIWEQILR) the chain is Cytoplasmic. A helical membrane pass occupies residues 138–158 (VPFILEIINAVPFIISIFWPT). The Extracellular portion of the chain corresponds to 159–160 (LR). Residues 161–173 (NLFVPVFLNCWLA) traverse the membrane as a helical segment. The Cytoplasmic portion of the chain corresponds to 174–198 (KHALENMINDLHRAIQRTQSAMFNQ). The helical transmembrane segment at 199–219 (VLILISTLLCLIFTCICGIQH) threads the bilayer. Topologically, residues 220–228 (LERIGKKLN) are extracellular. Residues 229–249 (LFDSLYFCIVTFSTVGFGDVT) constitute an intramembrane region (pore-forming). Residues 250-256 (PETWSSK) lie on the Extracellular side of the membrane. Residues 257-277 (LFVVAMICVALVVLPIQFEQL) form a helical membrane-spanning segment. Over 278 to 1142 (AYLWMERQKS…VQDSREETQL (865 aa)) the chain is Cytoplasmic. 2 RCK N-terminal domains span residues 299–435 (EKHV…DHVV) and 725–865 (NKLI…CYSL). 2 disordered regions span residues 989–1044 (DTKD…EKIT) and 1118–1142 (PNSEPSRKNSICNAAVQDSREETQL). Residues 1017 to 1037 (LRRKSMQWARRLSRKGPKHSG) are compositionally biased toward basic residues. Positions 1118–1129 (PNSEPSRKNSIC) are enriched in polar residues.

Belongs to the potassium channel family. Calcium-activated (TC 1.A.1.3) subfamily. KCa4.2/KCNT2 sub-subfamily. In terms of assembly, homotetramer. Forms heteromer with KCNT1; heteromeric channels differ from those of homomeric channels in their unitary conductance, kinetic behavior, subcellular localization, and response to activation of protein kinase C. Post-translationally, phosphorylated by protein kinase C. Phosphorylation of the C-terminal domain inhibits channel activity. In terms of tissue distribution, detected in brain, and at low levels in heart. Detected in brainstem, including auditory neurons such as the medial nucleus of the trapezoid body. Detected in the olfactory bulb, red nucleus, facial nucleus, pontine nucleus, oculomotor nucleus, substantia nigra, deep cerebellar nuclei, vestibular nucleus, and the thalamus. Detected in hippocampal CA1, CA2, and CA3 regions, the dentate gyrus, supraoptic nucleus, hypothalamus, dorsal root ganglion, and cortical layers II, III, and V. Detected in striatum cholinergic interneurons.

It localises to the cell membrane. It carries out the reaction K(+)(in) = K(+)(out). With respect to regulation, are normally in a closed state unless activated by an increase in intracellular Na(+) and Cl(-). Inhibited upon stimulation of G-protein coupled receptors, such as CHRM1 and GRM1. There is conflicting data about the effect of ATP on KNCT2 channels activity. Intracellular ATP was initially report to inhibit the channel activity. However, others studies conclude that KNCT2 channels are not inhibited by intracellular ATP. Its function is as follows. Sodium-activated and chloride-activated potassium channel. Produces rapidly activating outward rectifier K(+) currents. Contributes to regulate neuronal excitability. The polypeptide is Potassium channel subfamily T member 2 (Kcnt2) (Rattus norvegicus (Rat)).